The following is a 661-amino-acid chain: MFSRFARSFSSDDRTRKSYDGSYQSFNAGERDLPTPTRDWCSISQRITSERVRDGCLIPTPGEALETAVKALSEKTDSLTSPVLQSTERHSVLLGLHHNNVPESLVVSCMSNDVHDGFMQRYMETIQRCLDDLKLSGDGLWWVYENTYWQYLKYTTGAEVPVTSEKVNKKSKSTVLLFSSVVANKPISRHPFKSKVINSDYRGICQELREALGAVQKYMYFMRPDDPTNPSPDTRIRVQEIAAYTATGYGWMLWFLDVVDARVCRHLKLQFRRIRGPRASVIPDDLLRRHLKTGPAVSAGTGVAFILAATTASALTALLRISVLWRKEEWRDGLNGTAAAIVAAVELITLLHHHFQYLINMMLIGYACWGDGGLNDPYILKALRAQGRFLYFAGQLVRTMSTHSWVVLETSTHMWFSRAVAQSILAHGGKPTKYYAQVLAASKRYTPLHLRRISEPSSVSDQPYIRFNRLGSPIGTGIGNLECVCLTGNYLSDDVNASSHVINTEAPLNSIAPDTNRQRTSRVLVRPDTGLDVTVRKNHCLDIGHTDGSPVDPTYPDHYTRIKAEYEGPVRDESNTMFDQRSDLRHIETQASLNDHVYENIPPKEVGFNSSSDLDVDSLNGYTSGDMHTDDDLSPDFIPNDVPVRCKTTVTFRKNTPKSHH.

The interval 1–31 (MFSRFARSFSSDDRTRKSYDGSYQSFNAGER) is disordered. A compositionally biased stretch (basic and acidic residues) spans 10–19 (SSDDRTRKSY). The next 2 membrane-spanning stretches (helical) occupy residues 299–319 (AGTG…TALL) and 339–359 (AAIV…QYLI).

It belongs to the herpesviridae HHV-1 VP11/12 protein family. Phosphorylated by host LCK. The phosphorylation seems to be lymphocyte-specific.

The protein resides in the virion tegument. The protein localises to the host cytoplasm. It localises to the host membrane. Plays a role in the activation of the host PI3K/AKT pathway to promote cell survival. Interacts with and activates PI3KR1 in order to phosphorylate host AKT on its activating residues. Activates the host AP-1 pathway by triggering phosphorylation of host ERK1/2. Participates in host BIM and BAD phosphorylation, leading to apoptosis inhibition. The protein is Tegument protein UL46 homolog of Varicella-zoster virus (strain Oka vaccine) (HHV-3).